Here is a 983-residue protein sequence, read N- to C-terminus: Ephrin type-A receptor 3 (983 aa).

Positions 1-19 are cleaved as a signal peptide; that stretch reads MDRRRLPLLLLCAALGSAG. At 20-540 the chain is on the extracellular side; it reads RLSARPGNEV…SFSISSENSQ (521 aa). The region spanning 28–206 is the Eph LBD domain; sequence EVNLLDSKTI…YFKKCPFTVK (179 aa). Residues Asn231, Asn336, Asn390, Asn403, and Asn492 are each glycosylated (N-linked (GlcNAc...) asparagine). 2 Fibronectin type-III domains span residues 324-434 and 435-530; these read PPSA…TNQA and APSP…TSPD. A helical membrane pass occupies residues 541–564; it reads VVMIAISAAVAIILLTVVVYVLIG. At 565 to 983 the chain is on the cytoplasmic side; the sequence is RFCGYKKSKH…THTKNSPVPV (419 aa). Phosphotyrosine; by autocatalysis occurs at positions 596 and 602. The region spanning 621-882 is the Protein kinase domain; the sequence is ISIDKVVGAG…QIVSILDKLI (262 aa). Residues 628 to 633, Lys653, and 700 to 706 contribute to the ATP site; these read GAGEFG and EYMENGS. At Tyr701 the chain carries Phosphotyrosine; by autocatalysis. Asp746 (proton acceptor) is an active-site residue. 750–751 contacts ATP; sequence RN. Phosphotyrosine; by autocatalysis is present on Tyr779. An SAM domain is found at 911–975; sequence SAFRTAGDWL…VSSIKTLETH (65 aa). The PDZ-binding motif lies at 981–983; it reads VPV.

It belongs to the protein kinase superfamily. Tyr protein kinase family. Ephrin receptor subfamily. Heterotetramer upon binding of the ligand. The heterotetramer is composed of an ephrin dimer and a receptor dimer. Oligomerization is probably required to induce biological responses. Post-translationally, autophosphorylates upon activation by EFNA5. Highly expressed in the developing brain and embryonic tissues. In adult, the greatest levels of expression occur in the brain. It is expressed in a graded manner across the retina with the highest expression at its temporal pole. Detectable in all other adult tissues examined, except the liver.

The protein localises to the cell membrane. The enzyme catalyses L-tyrosyl-[protein] + ATP = O-phospho-L-tyrosyl-[protein] + ADP + H(+). Its function is as follows. Receptor tyrosine kinase which binds promiscuously membrane-bound ephrin family ligands residing on adjacent cells, leading to contact-dependent bidirectional signaling into neighboring cells. The signaling pathway downstream of the receptor is referred to as forward signaling while the signaling pathway downstream of the ephrin ligand is referred to as reverse signaling. Highly promiscuous for ephrin-A ligands it binds preferentially EFNA5. Upon activation by EFNA5 regulates cell-cell adhesion, cytoskeletal organization and cell migration. Plays a role in cardiac cells migration and differentiation probably through activation by EFNA1. Involved in the retinotectal mapping of neurons. May also control the segregation but not the guidance of motor and sensory axons during neuromuscular circuit development. In Gallus gallus (Chicken), this protein is Ephrin type-A receptor 3 (EPHA3).